Reading from the N-terminus, the 331-residue chain is Ketol-acid reductoisomerase (NADP(+)) (331 aa).

The region spanning 2–182 (AQLFYDSDAD…GGTRAGILET (181 aa)) is the KARI N-terminal Rossmann domain. NADP(+)-binding positions include 25–28 (YGSQ), S51, S53, and 83–86 (DEFQ). The active site involves H108. G134 contributes to the NADP(+) binding site. A KARI C-terminal knotted domain is found at 183-328 (NFKEETETDL…KGLRSMFSWL (146 aa)). Positions 191, 195, 227, and 231 each coordinate Mg(2+). S252 serves as a coordination point for substrate.

It belongs to the ketol-acid reductoisomerase family. Mg(2+) is required as a cofactor.

It carries out the reaction (2R)-2,3-dihydroxy-3-methylbutanoate + NADP(+) = (2S)-2-acetolactate + NADPH + H(+). It catalyses the reaction (2R,3R)-2,3-dihydroxy-3-methylpentanoate + NADP(+) = (S)-2-ethyl-2-hydroxy-3-oxobutanoate + NADPH + H(+). Its pathway is amino-acid biosynthesis; L-isoleucine biosynthesis; L-isoleucine from 2-oxobutanoate: step 2/4. It functions in the pathway amino-acid biosynthesis; L-valine biosynthesis; L-valine from pyruvate: step 2/4. Functionally, involved in the biosynthesis of branched-chain amino acids (BCAA). Catalyzes an alkyl-migration followed by a ketol-acid reduction of (S)-2-acetolactate (S2AL) to yield (R)-2,3-dihydroxy-isovalerate. In the isomerase reaction, S2AL is rearranged via a Mg-dependent methyl migration to produce 3-hydroxy-3-methyl-2-ketobutyrate (HMKB). In the reductase reaction, this 2-ketoacid undergoes a metal-dependent reduction by NADPH to yield (R)-2,3-dihydroxy-isovalerate. The polypeptide is Ketol-acid reductoisomerase (NADP(+)) (Parasynechococcus marenigrum (strain WH8102)).